A 120-amino-acid polypeptide reads, in one-letter code: NAD(P)H-quinone oxidoreductase subunit 3, chloroplastic (120 aa).

A run of 3 helical transmembrane segments spans residues 9–29 (IFWA…LLSG), 64–84 (MFAL…PWAM), and 88–108 (VLGV…IVGL).

It belongs to the complex I subunit 3 family. As to quaternary structure, NDH is composed of at least 16 different subunits, 5 of which are encoded in the nucleus.

It localises to the plastid. The protein localises to the chloroplast thylakoid membrane. It catalyses the reaction a plastoquinone + NADH + (n+1) H(+)(in) = a plastoquinol + NAD(+) + n H(+)(out). The catalysed reaction is a plastoquinone + NADPH + (n+1) H(+)(in) = a plastoquinol + NADP(+) + n H(+)(out). NDH shuttles electrons from NAD(P)H:plastoquinone, via FMN and iron-sulfur (Fe-S) centers, to quinones in the photosynthetic chain and possibly in a chloroplast respiratory chain. The immediate electron acceptor for the enzyme in this species is believed to be plastoquinone. Couples the redox reaction to proton translocation, and thus conserves the redox energy in a proton gradient. This Fagopyrum esculentum subsp. ancestrale (Wild buckwheat) protein is NAD(P)H-quinone oxidoreductase subunit 3, chloroplastic.